A 421-amino-acid chain; its full sequence is UDP-N-acetylglucosamine 1-carboxyvinyltransferase (421 aa).

K22 to N23 lines the phosphoenolpyruvate pocket. Residue R93 coordinates UDP-N-acetyl-alpha-D-glucosamine. The active-site Proton donor is the C117. Residue C117 is modified to 2-(S-cysteinyl)pyruvic acid O-phosphothioketal. UDP-N-acetyl-alpha-D-glucosamine contacts are provided by residues R122–Q126, D309, and I331.

It belongs to the EPSP synthase family. MurA subfamily.

Its subcellular location is the cytoplasm. It catalyses the reaction phosphoenolpyruvate + UDP-N-acetyl-alpha-D-glucosamine = UDP-N-acetyl-3-O-(1-carboxyvinyl)-alpha-D-glucosamine + phosphate. It functions in the pathway cell wall biogenesis; peptidoglycan biosynthesis. Cell wall formation. Adds enolpyruvyl to UDP-N-acetylglucosamine. The sequence is that of UDP-N-acetylglucosamine 1-carboxyvinyltransferase from Albidiferax ferrireducens (strain ATCC BAA-621 / DSM 15236 / T118) (Rhodoferax ferrireducens).